A 229-amino-acid polypeptide reads, in one-letter code: Uracil-DNA glycosylase (229 aa).

Asp-64 serves as the catalytic Proton acceptor.

It belongs to the uracil-DNA glycosylase (UDG) superfamily. UNG family.

It is found in the cytoplasm. It carries out the reaction Hydrolyzes single-stranded DNA or mismatched double-stranded DNA and polynucleotides, releasing free uracil.. Excises uracil residues from the DNA which can arise as a result of misincorporation of dUMP residues by DNA polymerase or due to deamination of cytosine. This is Uracil-DNA glycosylase from Shigella flexneri serotype 5b (strain 8401).